A 296-amino-acid chain; its full sequence is tRNA dimethylallyltransferase (296 aa).

ATP is bound at residue 10-17 (GPTASGKT). 12-17 (TASGKT) provides a ligand contact to substrate. An interaction with substrate tRNA region spans residues 35–38 (DSRQ).

It belongs to the IPP transferase family. Monomer. It depends on Mg(2+) as a cofactor.

The enzyme catalyses adenosine(37) in tRNA + dimethylallyl diphosphate = N(6)-dimethylallyladenosine(37) in tRNA + diphosphate. Its function is as follows. Catalyzes the transfer of a dimethylallyl group onto the adenine at position 37 in tRNAs that read codons beginning with uridine, leading to the formation of N6-(dimethylallyl)adenosine (i(6)A). The polypeptide is tRNA dimethylallyltransferase (Synechococcus sp. (strain RCC307)).